The sequence spans 357 residues: Histidinol-phosphate aminotransferase (357 aa).

An N6-(pyridoxal phosphate)lysine modification is found at K218.

It belongs to the class-II pyridoxal-phosphate-dependent aminotransferase family. Histidinol-phosphate aminotransferase subfamily. Homodimer. Requires pyridoxal 5'-phosphate as cofactor.

The catalysed reaction is L-histidinol phosphate + 2-oxoglutarate = 3-(imidazol-4-yl)-2-oxopropyl phosphate + L-glutamate. It participates in amino-acid biosynthesis; L-histidine biosynthesis; L-histidine from 5-phospho-alpha-D-ribose 1-diphosphate: step 7/9. This chain is Histidinol-phosphate aminotransferase, found in Chlorobium luteolum (strain DSM 273 / BCRC 81028 / 2530) (Pelodictyon luteolum).